We begin with the raw amino-acid sequence, 457 residues long: DDB1- and CUL4-associated factor 10 (457 aa).

WD repeat units lie at residues 65–104 (RTHG…HIKT), 108–146 (AHED…SKAC), 150–189 (GHTS…EDGC), and 195–234 (FHTR…KSLE). A compositionally biased stretch (low complexity) spans 246–265 (TASTSDMTSTSSETRPSSSP). The segment at 246–304 (TASTSDMTSTSSETRPSSSPCHNSDSGPLFEKHMSRSSQREGTSPRNSLEVLTPEVPGE) is disordered. A compositionally biased stretch (polar residues) spans 281–292 (RSSQREGTSPRN). WD repeat units lie at residues 306–346 (DRGN…QEGT), 368–406 (VGRG…KELV), and 424–457 (SHKD…QPKF).

The protein belongs to the WD repeat DCAF10 family.

It functions in the pathway protein modification; protein ubiquitination. May function as a substrate receptor for CUL4-DDB1 E3 ubiquitin-protein ligase complex. In Xenopus laevis (African clawed frog), this protein is DDB1- and CUL4-associated factor 10 (dcaf10).